Reading from the N-terminus, the 327-residue chain is Aquaporin-1 (327 aa).

The interval 1–34 is disordered; that stretch reads MSSNDSNDTDKQHTRLDPTGVDDAYIPPEQPETK. Residues 1–48 lie on the Cytoplasmic side of the membrane; that stretch reads MSSNDSNDTDKQHTRLDPTGVDDAYIPPEQPETKHHRFKISRDTLRNH. Residues 49-69 traverse the membrane as a helical segment; it reads FIAAVGEFCGTFMFLWCAYVI. The Extracellular segment spans residues 70-91; it reads CNVANHDVALVAAPDGSHPGQL. The helical transmembrane segment at 92 to 112 threads the bilayer; that stretch reads IMIAIGFGFSVMFSIWCFAGV. The Cytoplasmic segment spans residues 113-136; sequence SGGALNPAVSLSLCLARAVSPTRC. An NPA 1 motif is present at residues 118-120; sequence NPA. The helical transmembrane segment at 137–157 threads the bilayer; the sequence is VVMWVSQIVAGMAAGGAASAM. The Extracellular segment spans residues 158-176; sequence TPGEVLFANSLGLGCSRTR. Residues 177-197 traverse the membrane as a helical segment; it reads GLFLEMFGTAILCLTVLMTAV. Residues 198-203 are Cytoplasmic-facing; sequence EKRETN. Residues 204–224 form a helical membrane-spanning segment; that stretch reads FMAALPIGISLFIAHVALTAY. At 225–248 the chain is on the extracellular side; the sequence is TGTGVNPARSLGAAVAARYFPHYH. An NPA 2 motif is present at residues 230 to 232; sequence NPA. A helical membrane pass occupies residues 249 to 269; sequence WIYWIGPLLGSILAWSVWQLL. The Cytoplasmic segment spans residues 270-327; it reads QILDYTTYVTAEKAASTKEKAQKKVKPAVPLLWLKSNFPLLFFISRSLALNVIIFGKN.

The protein belongs to the MIP/aquaporin (TC 1.A.8) family.

The protein localises to the endoplasmic reticulum membrane. It localises to the cell membrane. Water channel required to facilitate the transport of water across membranes. Involved in sporulation, freeze tolerance and osmotolerance. Is non-functional in most laboratory strains. The polypeptide is Aquaporin-1 (AQY1) (Saccharomyces cerevisiae (Baker's yeast)).